A 98-amino-acid polypeptide reads, in one-letter code: Cytochrome b (98 aa).

3 helical membrane-spanning segments follow: residues 1–18 (LLGLCLITQILTGLFLAM), 42–63 (WLIRNVHANGASFFFICLYLHV), and 78–98 (WNIGVVLLLLTMMTAFVGYVL). The heme b site is built by H48 and H62.

This sequence belongs to the cytochrome b family. As to quaternary structure, the cytochrome bc1 complex contains 3 respiratory subunits (MT-CYB, CYC1 and UQCRFS1), 2 core proteins (UQCRC1 and UQCRC2) and probably 6 low-molecular weight proteins. Heme b is required as a cofactor.

The protein resides in the mitochondrion inner membrane. Functionally, component of the ubiquinol-cytochrome c reductase complex (complex III or cytochrome b-c1 complex) that is part of the mitochondrial respiratory chain. The b-c1 complex mediates electron transfer from ubiquinol to cytochrome c. Contributes to the generation of a proton gradient across the mitochondrial membrane that is then used for ATP synthesis. In Scaphirhynchus platorynchus (Shovelnose sturgeon), this protein is Cytochrome b (mt-cyb).